The sequence spans 142 residues: Large ribosomal subunit protein uL11 (142 aa).

Belongs to the universal ribosomal protein uL11 family. Part of the ribosomal stalk of the 50S ribosomal subunit. Interacts with L10 and the large rRNA to form the base of the stalk. L10 forms an elongated spine to which L12 dimers bind in a sequential fashion forming a multimeric L10(L12)X complex. In terms of processing, one or more lysine residues are methylated.

Functionally, forms part of the ribosomal stalk which helps the ribosome interact with GTP-bound translation factors. The sequence is that of Large ribosomal subunit protein uL11 from Ruthia magnifica subsp. Calyptogena magnifica.